Consider the following 315-residue polypeptide: Putative purine nucleoside phosphorylase (315 aa).

Phosphate is bound by residues serine 49, histidine 81, 103–105 (RYH), and alanine 135. Glutamate 220 is an a purine D-ribonucleoside binding site. Serine 239 contacts phosphate. Residue asparagine 262 coordinates a purine D-ribonucleoside.

This sequence belongs to the PNP/MTAP phosphorylase family.

The protein localises to the cytoplasm. The protein resides in the nucleus. It catalyses the reaction a purine D-ribonucleoside + phosphate = a purine nucleobase + alpha-D-ribose 1-phosphate. It participates in purine metabolism; purine nucleoside salvage. In terms of biological role, the purine nucleoside phosphorylases catalyze the phosphorolytic breakdown of the N-glycosidic bond in the beta-(deoxy)ribonucleoside molecules, with the formation of the corresponding free purine bases and pentose-1-phosphate. Cleaves guanosine and inosine. The polypeptide is Putative purine nucleoside phosphorylase (Schizosaccharomyces pombe (strain 972 / ATCC 24843) (Fission yeast)).